A 389-amino-acid polypeptide reads, in one-letter code: tRNA-specific 2-thiouridylase MnmA (389 aa).

ATP is bound by residues 35–42 and methionine 61; that span reads GMSGGVDS. The tract at residues 121–123 is interaction with target base in tRNA; that stretch reads NPD. Cysteine 126 functions as the Nucleophile in the catalytic mechanism. Cysteines 126 and 223 form a disulfide. An ATP-binding site is contributed by glycine 151. The tract at residues 173–175 is interaction with tRNA; that stretch reads KDQ. Catalysis depends on cysteine 223, which acts as the Cysteine persulfide intermediate. Residues 335–336 form an interaction with tRNA region; the sequence is RY.

This sequence belongs to the MnmA/TRMU family.

The protein resides in the cytoplasm. It catalyses the reaction S-sulfanyl-L-cysteinyl-[protein] + uridine(34) in tRNA + AH2 + ATP = 2-thiouridine(34) in tRNA + L-cysteinyl-[protein] + A + AMP + diphosphate + H(+). Its function is as follows. Catalyzes the 2-thiolation of uridine at the wobble position (U34) of tRNA, leading to the formation of s(2)U34. This chain is tRNA-specific 2-thiouridylase MnmA, found in Actinobacillus succinogenes (strain ATCC 55618 / DSM 22257 / CCUG 43843 / 130Z).